The primary structure comprises 70 residues: Cold shock protein CspV (70 aa).

One can recognise a CSD domain in the interval 7–67 (GSVKWFNETK…GKKGPQASNV (61 aa)).

It localises to the cytoplasm. The chain is Cold shock protein CspV (cspV) from Vibrio cholerae serotype O1 (strain ATCC 39315 / El Tor Inaba N16961).